A 1522-amino-acid polypeptide reads, in one-letter code: Sodium channel protein 1 brain (1522 aa).

Residues 1 to 50 (MDEKYTAKNRDKTFVVIEKRFKKNIIHRFSAKRSLFLFTPRNPIRRLAVC) are Cytoplasmic-facing. The I repeat unit spans residues 41 to 342 (RNPIRRLAVC…VATAYELEVK (302 aa)). A helical membrane pass occupies residues 51-70 (IATNVCFDYFLMFTIMINCV). The Extracellular portion of the chain corresponds to 71–77 (FLAMPDI). A helical transmembrane segment spans residues 78 to 99 (SEFAEYIFLGIYTMEMAIKLVA). The Cytoplasmic segment spans residues 100–112 (GGFFIDKYTYLRD). Residues 113-134 (AWNCLDFTVIMISYITLLLQTI) traverse the membrane as a helical segment. The Extracellular segment spans residues 135–143 (NDKVISDIT). A helical; Voltage-sensor membrane pass occupies residues 144–167 (GLRTFRVLRALRTLSIIPGLKTMV). The Cytoplasmic portion of the chain corresponds to 168 to 179 (NALLRALRMLIS). Residues 180 to 201 (VLILILFCLWIFSQAGVQLFGG) traverse the membrane as a helical segment. Residues 202–278 (ALRHKCVLQI…PNYGYTNFDS (77 aa)) are Extracellular-facing. Cys207 and Cys255 are joined by a disulfide. N-linked (GlcNAc...) asparagine glycosylation is found at Asn248 and Asn258. Residues 279–303 (IGWSMLISFQLLTQDYWEDVYNKVI) constitute an intramembrane region (pore-forming). Over 304–308 (RAHSP) the chain is Extracellular. Residues 309-331 (WTVIYFIVINFFGSLYLMNLMLA) form a helical membrane-spanning segment. Residues 332-406 (VVATAYELEV…WLRVQSFAHC (75 aa)) lie on the Cytoplasmic side of the membrane. One copy of the II repeat lies at 393 to 647 (CYNPWLRVQS…EQEVEVSSFA (255 aa)). The chain crosses the membrane as a helical span at residues 407–426 (IITDSFTEVFIIFIIVLNTV). Topologically, residues 427–442 (FLAMEHHGMSMELKNV) are extracellular. Residues 443–464 (LKVANYVFTTVFVLEAILKLLA) form a helical membrane-spanning segment. Residues 465-472 (FNKQYFKS) lie on the Cytoplasmic side of the membrane. Residues 473-491 (GWNICDLVVVVASLIDLGV) form a helical membrane-spanning segment. The Extracellular portion of the chain corresponds to 492 to 498 (EGLKGVS). Residues 499 to 522 (VFRSFRLLRVFHLAQSWTTMRLLL) form a helical; Voltage-sensor membrane-spanning segment. The Cytoplasmic portion of the chain corresponds to 523-531 (CIILNTLGS). A helical membrane pass occupies residues 532–553 (LGYLTIILIIVIYIFAVTGLQL). Topologically, residues 554–575 (FHTEYTPDKFRGEPVPRWNFND) are extracellular. The pore-forming intramembrane region spans 576–596 (FLHSFMMVFRILCGEWIEPMY). The Extracellular segment spans residues 597–607 (DCMRACNGLCF). Cys598 and Cys606 form a disulfide bridge. Residues 608–628 (LIFIPVTVFGKTLFFLFIGLV) form a helical membrane-spanning segment. At 629 to 777 (LGAFGSDTVE…WNNFRRQLMM (149 aa)) the chain is on the cytoplasmic side. An III repeat occupies 770–1074 (NFRRQLMMVC…QNYYNTLKKL (305 aa)). Residues 778 to 797 (VCENKYFETGVLVIIFASSI) form a helical membrane-spanning segment. The Extracellular segment spans residues 798-815 (LLAFEDIYLNEKPRLKLA). A helical membrane pass occupies residues 816–837 (IFYLDITFCLLFFLEMVLKLVA). Residues 838–846 (LGFVHYYTH) are Cytoplasmic-facing. A helical transmembrane segment spans residues 847–868 (FWTILDFTIVIITVISLAASGL). At 869-874 (GMEQIT) the chain is on the extracellular side. Residues 875–898 (AFRSLRTLRALRPLRAVSRWQGMK) form a helical; Voltage-sensor membrane-spanning segment. At 899–915 (IIVNALMLSIPSIFNVL) the chain is on the cytoplasmic side. The helical transmembrane segment at 916–937 (LVCVVFWLIFAIMGVQLFAGKF) threads the bilayer. At 938-976 (YKCVNETNMRIPPTEVANKIECYNKNYTWVNSNVNFDNV) the chain is on the extracellular side. Asn942 and Asn963 each carry an N-linked (GlcNAc...) asparagine glycan. Residues 977 to 998 (GGAFLALFQVATFEGWMEIMAD) constitute an intramembrane region (pore-forming). The Extracellular portion of the chain corresponds to 999–1009 (AVDVTEVDEQP). A helical transmembrane segment spans residues 1010–1022 (KFEATVYYYFYFV). At 1023-1100 (LFIIFGSFFV…QAVVYDLVMS (78 aa)) the chain is on the cytoplasmic side. Thr1076 bears the Phosphothreonine; by PKC mark. Residues 1083-1386 (VKRPKNKCQA…WEQYDPLATQ (304 aa)) form an IV repeat. A helical transmembrane segment spans residues 1101 to 1120 (NQFEIFITTIIITNMIFMAF). Residues 1121–1132 (EHYNQSEVVTEV) lie on the Extracellular side of the membrane. An N-linked (GlcNAc...) asparagine glycan is attached at Asn1124. A helical membrane pass occupies residues 1133-1154 (LATANIAFTILYAVEAIIKIIG). Topologically, residues 1155–1162 (LRIHYLRN) are cytoplasmic. A helical membrane pass occupies residues 1163–1184 (LWNVFDFLVVTLSVMDAFLNDI). Over 1185-1194 (FGDGIFMNPS) the chain is Extracellular. The chain crosses the membrane as a helical; Voltage-sensor span at residues 1195–1218 (LLRVARMFRIGRIIRLIKWAKGMR). Topologically, residues 1219 to 1236 (KLLFALVISLPALFNIGA) are cytoplasmic. Residues 1237–1258 (LLMLVMFIYTIIGMSSFGQIKL) form a helical membrane-spanning segment. Residues 1259 to 1270 (SGALNDQVNFQT) lie on the Extracellular side of the membrane. The pore-forming intramembrane region spans 1271–1293 (FGKTFLLLVRLATSAGWNDILGP). The Extracellular portion of the chain corresponds to 1294-1323 (LLIQPPNCDPNYITTSTGEKIKVVNGDCGM). Residues 1324-1346 (PWLAISYMVSYIIIVFMIVFNMY) form a helical membrane-spanning segment. The Cytoplasmic segment spans residues 1347 to 1522 (IAVILENFNQ…FIISAPETAV (176 aa)).

The protein belongs to the sodium channel (TC 1.A.1.10) family.

Its subcellular location is the cell membrane. Mediates the voltage-dependent sodium ion permeability of excitable membranes. Assuming opened or closed conformations in response to the voltage difference across the membrane, the protein forms a sodium-selective channel through which Na(+) ions may pass in accordance with their electrochemical gradient. The sequence is that of Sodium channel protein 1 brain from Heterololigo bleekeri (Spear squid).